The following is a 627-amino-acid chain: Carene synthase, chloroplastic (627 aa).

A chloroplast-targeting transit peptide spans 1–36; the sequence is MSVISILPLASKSCLYKSLMSSTHELKALCRPIATL. 3 residues coordinate Mg(2+): Asp378, Asp382, and Asp530. The DDXXD motif signature appears at 378–382; sequence DDMYD.

Belongs to the terpene synthase family. Tpsd subfamily. Mg(2+) is required as a cofactor. The cofactor is Mn(2+).

The protein resides in the plastid. It localises to the chloroplast. It carries out the reaction (2E)-geranyl diphosphate = (+)-car-3-ene + diphosphate. It participates in terpene metabolism; oleoresin biosynthesis. Functionally, terpene synthase (TPS) involved in defensive oleoresin formation in conifers in response to insect attack or other injury. This chain is Carene synthase, chloroplastic (JF67), found in Picea abies (Norway spruce).